The primary structure comprises 388 residues: Succinate--CoA ligase [ADP-forming] subunit beta (388 aa).

The 236-residue stretch at 9–244 (KQLFAEYGLP…PSQDDPREAH (236 aa)) folds into the ATP-grasp domain. ATP-binding positions include lysine 46, 53 to 55 (GRG), glutamate 99, threonine 102, and glutamate 107. Asparagine 199 and aspartate 213 together coordinate Mg(2+). Substrate contacts are provided by residues asparagine 264 and 321–323 (GIV).

This sequence belongs to the succinate/malate CoA ligase beta subunit family. Heterotetramer of two alpha and two beta subunits. The cofactor is Mg(2+).

The enzyme catalyses succinate + ATP + CoA = succinyl-CoA + ADP + phosphate. It carries out the reaction GTP + succinate + CoA = succinyl-CoA + GDP + phosphate. The protein operates within carbohydrate metabolism; tricarboxylic acid cycle; succinate from succinyl-CoA (ligase route): step 1/1. Succinyl-CoA synthetase functions in the citric acid cycle (TCA), coupling the hydrolysis of succinyl-CoA to the synthesis of either ATP or GTP and thus represents the only step of substrate-level phosphorylation in the TCA. The beta subunit provides nucleotide specificity of the enzyme and binds the substrate succinate, while the binding sites for coenzyme A and phosphate are found in the alpha subunit. This is Succinate--CoA ligase [ADP-forming] subunit beta from Stutzerimonas stutzeri (strain A1501) (Pseudomonas stutzeri).